The chain runs to 903 residues: Protein translocase subunit SecA (903 aa).

ATP-binding positions include Gln-89, 107-111 (GEGKT), and Asp-502. Residues Cys-886, Cys-888, Cys-897, and His-898 each contribute to the Zn(2+) site.

This sequence belongs to the SecA family. In terms of assembly, monomer and homodimer. Part of the essential Sec protein translocation apparatus which comprises SecA, SecYEG and auxiliary proteins SecDF-YajC and YidC. It depends on Zn(2+) as a cofactor.

Its subcellular location is the cell inner membrane. The protein localises to the cytoplasm. The catalysed reaction is ATP + H2O + cellular proteinSide 1 = ADP + phosphate + cellular proteinSide 2.. Its function is as follows. Part of the Sec protein translocase complex. Interacts with the SecYEG preprotein conducting channel. Has a central role in coupling the hydrolysis of ATP to the transfer of proteins into and across the cell membrane, serving both as a receptor for the preprotein-SecB complex and as an ATP-driven molecular motor driving the stepwise translocation of polypeptide chains across the membrane. This is Protein translocase subunit SecA from Sinorhizobium medicae (strain WSM419) (Ensifer medicae).